Reading from the N-terminus, the 347-residue chain is NADH-ubiquinone oxidoreductase chain 2 (347 aa).

11 consecutive transmembrane segments (helical) span residues 5–22 (ILITITSTVVLGTMIVLF), 26–45 (WFMIWVGFEMNMLAIIPILM), 60–80 (FLTQATASMLLMLSIIINLLC), 96–116 (TMITIALTMKLGLSPFHFWVP), 122–142 (ISLSSGMILLTWQKIAPLSIL), 153–173 (LLLMMAITSMLVGGWGGLNQT), 178–198 (ILAYSSITHMGWMAAIMVYNP), 200–220 (LAILNLTIYIMMTLGTFMLFM), 237–257 (FPLMAPLILMLMLSLGGLPPL), 274–294 (DMIIMPTLMAITALLNLYFYT), and 325–345 (LLAPLIVTSTMLLPLTPMLAA).

It belongs to the complex I subunit 2 family. As to quaternary structure, core subunit of respiratory chain NADH dehydrogenase (Complex I) which is composed of 45 different subunits. Interacts with TMEM242.

It is found in the mitochondrion inner membrane. The enzyme catalyses a ubiquinone + NADH + 5 H(+)(in) = a ubiquinol + NAD(+) + 4 H(+)(out). Core subunit of the mitochondrial membrane respiratory chain NADH dehydrogenase (Complex I) which catalyzes electron transfer from NADH through the respiratory chain, using ubiquinone as an electron acceptor. Essential for the catalytic activity and assembly of complex I. The polypeptide is NADH-ubiquinone oxidoreductase chain 2 (Ailuropoda melanoleuca (Giant panda)).